Reading from the N-terminus, the 233-residue chain is Orotidine 5'-phosphate decarboxylase (233 aa).

Residues aspartate 11, lysine 34, 61–70, threonine 117, arginine 179, glutamine 188, glycine 208, and arginine 209 each bind substrate; that span reads DLKLHDIPNT. Residue lysine 63 is the Proton donor of the active site.

The protein belongs to the OMP decarboxylase family. Type 1 subfamily. As to quaternary structure, homodimer.

The enzyme catalyses orotidine 5'-phosphate + H(+) = UMP + CO2. Its pathway is pyrimidine metabolism; UMP biosynthesis via de novo pathway; UMP from orotate: step 2/2. In terms of biological role, catalyzes the decarboxylation of orotidine 5'-monophosphate (OMP) to uridine 5'-monophosphate (UMP). This Streptococcus pneumoniae (strain CGSP14) protein is Orotidine 5'-phosphate decarboxylase.